A 333-amino-acid chain; its full sequence is MVERLLESSASWSNFFIFFGLAVLLLFAVLGFVTYGILAERKVMGFMQGRVGPNQVGGRFGLLQTVADVLKLLLKEDSIPKAADKPLFILAPIIAFAPAFMVLAVIPFTSQFQFADIGVGLLYYIAISGITTIGVLTGGWASNNKYSLLGGMRAAAQMISYEIPLVMSVIGIVLLTGSLNLNEIVASQEKVWYIFAQPIGFIIFLIAAVAELNRTPFDLPEAESELVSGYHTEYSGFRWAFFMLAEYVYLFGMASLMTVLFLGGWNPVLFLDFIPGAVWFALKFSAVVFLFIWFRVTFPRMRGDQLMEFGWKVLLPIALANIFLTALIKELFF.

The next 8 helical transmembrane spans lie at 15–35 (FFIF…FVTY), 88–108 (FILA…VIPF), 117–137 (IGVG…GVLT), 159–179 (ISYE…TGSL), 191–211 (VWYI…AVAE), 241–261 (FFML…TVLF), 273–293 (FIPG…LFIW), and 313–333 (VLLP…ELFF).

Belongs to the complex I subunit 1 family. NDH-1 is composed of 14 different subunits. Subunits NuoA, H, J, K, L, M, N constitute the membrane sector of the complex.

It localises to the cell membrane. It carries out the reaction a quinone + NADH + 5 H(+)(in) = a quinol + NAD(+) + 4 H(+)(out). Its function is as follows. NDH-1 shuttles electrons from NADH, via FMN and iron-sulfur (Fe-S) centers, to quinones in the respiratory chain. The immediate electron acceptor for the enzyme in this species is believed to be ubiquinone. Couples the redox reaction to proton translocation (for every two electrons transferred, four hydrogen ions are translocated across the cytoplasmic membrane), and thus conserves the redox energy in a proton gradient. This subunit may bind ubiquinone. This is NADH-quinone oxidoreductase subunit H from Bacillus cytotoxicus (strain DSM 22905 / CIP 110041 / 391-98 / NVH 391-98).